Reading from the N-terminus, the 183-residue chain is Small ribosomal subunit protein uS4c (183 aa).

The S4 RNA-binding domain maps to 82-143 (MRLDNILFRL…KQRSKALIQN (62 aa)).

This sequence belongs to the universal ribosomal protein uS4 family. Part of the 30S ribosomal subunit. Contacts protein S5. The interaction surface between S4 and S5 is involved in control of translational fidelity.

The protein localises to the plastid. It is found in the chloroplast. Functionally, one of the primary rRNA binding proteins, it binds directly to 16S rRNA where it nucleates assembly of the body of the 30S subunit. Its function is as follows. With S5 and S12 plays an important role in translational accuracy. The sequence is that of Small ribosomal subunit protein uS4c (rps4) from Sparaxis sp. (strain Lejeune 1997).